Reading from the N-terminus, the 379-residue chain is Succinyl-diaminopimelate desuccinylase (379 aa).

His-68 contacts Zn(2+). Residue Asp-70 is part of the active site. A Zn(2+)-binding site is contributed by Asp-101. The active-site Proton acceptor is Glu-134. The Zn(2+) site is built by Glu-135, Glu-163, and His-352.

The protein belongs to the peptidase M20A family. DapE subfamily. In terms of assembly, homodimer. Requires Zn(2+) as cofactor. It depends on Co(2+) as a cofactor.

The enzyme catalyses N-succinyl-(2S,6S)-2,6-diaminopimelate + H2O = (2S,6S)-2,6-diaminopimelate + succinate. Its pathway is amino-acid biosynthesis; L-lysine biosynthesis via DAP pathway; LL-2,6-diaminopimelate from (S)-tetrahydrodipicolinate (succinylase route): step 3/3. Catalyzes the hydrolysis of N-succinyl-L,L-diaminopimelic acid (SDAP), forming succinate and LL-2,6-diaminopimelate (DAP), an intermediate involved in the bacterial biosynthesis of lysine and meso-diaminopimelic acid, an essential component of bacterial cell walls. The chain is Succinyl-diaminopimelate desuccinylase from Dinoroseobacter shibae (strain DSM 16493 / NCIMB 14021 / DFL 12).